The following is a 198-amino-acid chain: FMN-dependent NADH:quinone oxidoreductase (198 aa).

Residues Ser10, 16–18, 94–97, and 138–141 each bind FMN; these read SQS, MYNF, and TRGG.

This sequence belongs to the azoreductase type 1 family. As to quaternary structure, homodimer. Requires FMN as cofactor.

It catalyses the reaction 2 a quinone + NADH + H(+) = 2 a 1,4-benzosemiquinone + NAD(+). The catalysed reaction is N,N-dimethyl-1,4-phenylenediamine + anthranilate + 2 NAD(+) = 2-(4-dimethylaminophenyl)diazenylbenzoate + 2 NADH + 2 H(+). In terms of biological role, quinone reductase that provides resistance to thiol-specific stress caused by electrophilic quinones. Also exhibits azoreductase activity. Catalyzes the reductive cleavage of the azo bond in aromatic azo compounds to the corresponding amines. In Shewanella sp. (strain MR-4), this protein is FMN-dependent NADH:quinone oxidoreductase.